Here is a 296-residue protein sequence, read N- to C-terminus: NAD kinase (296 aa).

The active-site Proton acceptor is Asp72. NAD(+)-binding positions include 72–73 (DG), 146–147 (ND), Arg157, Lys174, Asp176, 187–192 (TAYALS), and Gln247.

Belongs to the NAD kinase family. A divalent metal cation serves as cofactor.

It is found in the cytoplasm. It carries out the reaction NAD(+) + ATP = ADP + NADP(+) + H(+). Involved in the regulation of the intracellular balance of NAD and NADP, and is a key enzyme in the biosynthesis of NADP. Catalyzes specifically the phosphorylation on 2'-hydroxyl of the adenosine moiety of NAD to yield NADP. This is NAD kinase from Pseudomonas fluorescens (strain ATCC BAA-477 / NRRL B-23932 / Pf-5).